A 237-amino-acid chain; its full sequence is dTDP-3-amino-3,4,6-trideoxy-alpha-D-glucopyranose N,N-dimethyltransferase (237 aa).

The substrate site is built by Tyr14 and Arg17. S-adenosyl-L-methionine contacts are provided by residues Tyr21, Ala46, Glu67, 89–90, and Met105; that span reads DM. Substrate-binding positions include 145–147, Ser152, 165–169, and Arg229; these read TFA and RVSHS.

The protein belongs to the methyltransferase TylM1/DesVI family. Homodimer.

It carries out the reaction dTDP-3-amino-3,4,6-trideoxy-alpha-D-glucose + 2 S-adenosyl-L-methionine = dTDP-alpha-D-desosamine + 2 S-adenosyl-L-homocysteine + 2 H(+). It functions in the pathway antibiotic biosynthesis. S-adenosyl-L-methionine-dependent methyltransferase involved in the biosynthesis of desosamine, found in certain macrolide antibiotics such as erthyromycin, azithromycin, clarithromycin, and methymycin. Catalyzes the last step in the biosynthesis of dTDP-desosamine, i.e. the N,N-dimethylation of the 3-amino group of dTDP-3-amino-3,4,6-trideoxy-alpha-D-glucose. This Streptomyces venezuelae protein is dTDP-3-amino-3,4,6-trideoxy-alpha-D-glucopyranose N,N-dimethyltransferase.